Consider the following 681-residue polypeptide: Chaperone protein HtpG (681 aa).

Residues 1–326 are a; substrate-binding; it reads MQKGNIGVTT…SPDIPLNVSR (326 aa). The tract at residues 327 to 545 is b; sequence SYLQSDSNVK…YMRRMKEMAN (219 aa). Residues 546–681 are c; it reads IQAGMSFYGE…NFVKRSIELI (136 aa). Positions 601–620 are disordered; the sequence is DALKKKQEGKKDEDIPTAEK.

It belongs to the heat shock protein 90 family. In terms of assembly, homodimer.

The protein resides in the cytoplasm. Molecular chaperone. Has ATPase activity. The sequence is that of Chaperone protein HtpG from Bacteroides fragilis (strain ATCC 25285 / DSM 2151 / CCUG 4856 / JCM 11019 / LMG 10263 / NCTC 9343 / Onslow / VPI 2553 / EN-2).